Here is a 95-residue protein sequence, read N- to C-terminus: Aspartyl/glutamyl-tRNA(Asn/Gln) amidotransferase subunit C (95 aa).

The protein belongs to the GatC family. As to quaternary structure, heterotrimer of A, B and C subunits.

It carries out the reaction L-glutamyl-tRNA(Gln) + L-glutamine + ATP + H2O = L-glutaminyl-tRNA(Gln) + L-glutamate + ADP + phosphate + H(+). The catalysed reaction is L-aspartyl-tRNA(Asn) + L-glutamine + ATP + H2O = L-asparaginyl-tRNA(Asn) + L-glutamate + ADP + phosphate + 2 H(+). Functionally, allows the formation of correctly charged Asn-tRNA(Asn) or Gln-tRNA(Gln) through the transamidation of misacylated Asp-tRNA(Asn) or Glu-tRNA(Gln) in organisms which lack either or both of asparaginyl-tRNA or glutaminyl-tRNA synthetases. The reaction takes place in the presence of glutamine and ATP through an activated phospho-Asp-tRNA(Asn) or phospho-Glu-tRNA(Gln). This is Aspartyl/glutamyl-tRNA(Asn/Gln) amidotransferase subunit C from Rhodopseudomonas palustris (strain TIE-1).